The sequence spans 282 residues: D-alanine aminotransferase (282 aa).

Tyrosine 32 lines the substrate pocket. A pyridoxal 5'-phosphate-binding site is contributed by arginine 51. Substrate is bound by residues arginine 99 and histidine 101. Lysine 146 acts as the Proton acceptor in catalysis. Position 146 is an N6-(pyridoxal phosphate)lysine (lysine 146). Glutamate 178 contributes to the pyridoxal 5'-phosphate binding site.

Belongs to the class-IV pyridoxal-phosphate-dependent aminotransferase family. As to quaternary structure, homodimer. The cofactor is pyridoxal 5'-phosphate.

It catalyses the reaction D-alanine + 2-oxoglutarate = D-glutamate + pyruvate. In terms of biological role, acts on the D-isomers of alanine, leucine, aspartate, glutamate, aminobutyrate, norvaline and asparagine. The enzyme transfers an amino group from a substrate D-amino acid to the pyridoxal phosphate cofactor to form pyridoxamine and an alpha-keto acid in the first half-reaction. The second half-reaction is the reverse of the first, transferring the amino group from the pyridoxamine to a second alpha-keto acid to form the product D-amino acid via a ping-pong mechanism. This is an important process in the formation of D-alanine and D-glutamate, which are essential bacterial cell wall components. This is D-alanine aminotransferase (dat) from Staphylococcus aureus (strain COL).